Consider the following 722-residue polypeptide: Host cell factor 2 (722 aa).

Kelch repeat units follow at residues 34-79 (LMII…GFVC), 83-130 (RILV…RLGH), 207-255 (KMYV…VIGN), and 257-303 (MYIF…VSDS). Fibronectin type-III domains are found at residues 359–460 (APSQ…VDSS), 514–604 (TPSN…TCTP), and 606–716 (FPGA…DQEK). The interval 398–476 (ATSSDSSAAP…LAPNTSNNSS (79 aa)) is disordered. The span at 419–436 (QGSNSTLHNSVSDTVNST) shows a compositional bias: polar residues.

As to quaternary structure, binds KMT2A/MLL1. Component of the MLL1/MLL complex, at least composed of KMT2A/MLL1, ASH2L, RBBP5, DPY30, WDR5, MEN1, HCFC1 and HCFC2. Interacts with TASOR. As to expression, expressed in the spermatogonia, spermatocytes and ovary.

It localises to the cytoplasm. The protein resides in the nucleus. This Mus musculus (Mouse) protein is Host cell factor 2 (Hcfc2).